Reading from the N-terminus, the 525-residue chain is Alpha-ketoglutaric semialdehyde dehydrogenase 2 (525 aa).

NAD(+)-binding positions include K185, E188, and 242-247; that span reads GSRQGG. The Proton acceptor role is filled by E266. C303 functions as the Nucleophile in the catalytic mechanism. An NAD(+)-binding site is contributed by E394.

The protein belongs to the aldehyde dehydrogenase family. As to quaternary structure, homodimer.

The catalysed reaction is 2,5-dioxopentanoate + NADP(+) + H2O = 2-oxoglutarate + NADPH + 2 H(+). It catalyses the reaction 2,5-dioxopentanoate + NAD(+) + H2O = 2-oxoglutarate + NADH + 2 H(+). The protein operates within carbohydrate acid metabolism; D-glucarate degradation. Its pathway is carbohydrate acid metabolism; galactarate degradation. In terms of biological role, catalyzes the NAD(P)(+)-dependent oxidation of alpha-ketoglutaric semialdehyde (alphaKGSA) to alpha-ketoglutarate. Involved in D-glucarate/D-galactarate metabolism. Prefers NAD(+) to NADP(+) as a cosubstrate. The sequence is that of Alpha-ketoglutaric semialdehyde dehydrogenase 2 from Azospirillum brasilense.